The sequence spans 151 residues: Protein-export protein SecB (151 aa).

Belongs to the SecB family. As to quaternary structure, homotetramer, a dimer of dimers. One homotetramer interacts with 1 SecA dimer.

It is found in the cytoplasm. Functionally, one of the proteins required for the normal export of preproteins out of the cell cytoplasm. It is a molecular chaperone that binds to a subset of precursor proteins, maintaining them in a translocation-competent state. It also specifically binds to its receptor SecA. This chain is Protein-export protein SecB, found in Acinetobacter baylyi (strain ATCC 33305 / BD413 / ADP1).